A 310-amino-acid polypeptide reads, in one-letter code: Homoserine kinase (310 aa).

Residue 91–101 (PIGSGLGSSAC) coordinates ATP.

The protein belongs to the GHMP kinase family. Homoserine kinase subfamily.

Its subcellular location is the cytoplasm. The catalysed reaction is L-homoserine + ATP = O-phospho-L-homoserine + ADP + H(+). The protein operates within amino-acid biosynthesis; L-threonine biosynthesis; L-threonine from L-aspartate: step 4/5. Catalyzes the ATP-dependent phosphorylation of L-homoserine to L-homoserine phosphate. This is Homoserine kinase from Escherichia coli O139:H28 (strain E24377A / ETEC).